Consider the following 130-residue polypeptide: MNFNDIETMVKSKFKDIKKHAEEIAHEIEVRSGYLRKAEQYKRLEFNLSFALDDIESTAKDVQTAKSSANKDSVTVKGKAPNTLYIEKRNLMKQKLEMLGEDIDKNKESLQKAKEIAGEKASEYFNKAMN.

The protein belongs to the EsxC family. As to quaternary structure, forms both homodimers and heterodimers with EsxA. Homodimerization is calcium-dependent.

Its subcellular location is the secreted. The protein is Type VII secretion system extracellular protein C of Staphylococcus aureus (strain USA300).